We begin with the raw amino-acid sequence, 152 residues long: 3-hydroxyacyl-[acyl-carrier-protein] dehydratase FabZ (152 aa).

Residue H54 is part of the active site.

Belongs to the thioester dehydratase family. FabZ subfamily.

It localises to the cytoplasm. The catalysed reaction is a (3R)-hydroxyacyl-[ACP] = a (2E)-enoyl-[ACP] + H2O. Involved in unsaturated fatty acids biosynthesis. Catalyzes the dehydration of short chain beta-hydroxyacyl-ACPs and long chain saturated and unsaturated beta-hydroxyacyl-ACPs. This is 3-hydroxyacyl-[acyl-carrier-protein] dehydratase FabZ from Shewanella woodyi (strain ATCC 51908 / MS32).